A 161-amino-acid polypeptide reads, in one-letter code: MPSMDIVSEVNEVELRNAVDNSVRELKGRFDFRGKEASIEYKDHIVTLTAEDDFQCRQLVDILRMQMSKRDVDPKSMDVDEKAVHSGKTFSLKVKFKEGIETLVAKKLVKLIKDSKLKVQSSIQGDSVRVTGKKRDDLQQVMALARESELGQPFQFNNFRD.

It belongs to the YajQ family.

In terms of biological role, nucleotide-binding protein. This Shewanella halifaxensis (strain HAW-EB4) protein is Nucleotide-binding protein Shal_3198.